Here is a 63-residue protein sequence, read N- to C-terminus: MPKMKSVKGAVKRFKVKKSGKIKRGTAYRSHILTKVDGKHHRQMRSSKHVDTVDAKNIKEMIN.

This sequence belongs to the bacterial ribosomal protein bL35 family.

In Sulfurovum sp. (strain NBC37-1), this protein is Large ribosomal subunit protein bL35.